The primary structure comprises 221 residues: U1 small nuclear ribonucleoprotein C (221 aa).

Residues 4–36 (YFCDYCDTYLTHDSPSVRKTHCNGRKHKENVRV) form a Matrin-type zinc finger. The interval 100-168 (SNPFPTSQAG…PPGAPTLPQP (69 aa)) is disordered. Positions 134–166 (APAPPRMPGPLLMTPPPGAAAPGMAPPGAPTLP) are enriched in pro residues.

The protein belongs to the U1 small nuclear ribonucleoprotein C family. In terms of assembly, U1 snRNP is composed of the 7 core Sm proteins B/B', D1, D2, D3, E, F and G that assemble in a heptameric protein ring on the Sm site of the small nuclear RNA to form the core snRNP, and at least 3 U1 snRNP-specific proteins U1-70K, U1-A and U1-C. U1-C interacts with U1 snRNA and the 5' splice-site region of the pre-mRNA.

It is found in the nucleus. Functionally, component of the spliceosomal U1 snRNP, which is essential for recognition of the pre-mRNA 5' splice-site and the subsequent assembly of the spliceosome. U1-C is directly involved in initial 5' splice-site recognition for both constitutive and regulated alternative splicing. The interaction with the 5' splice-site seems to precede base-pairing between the pre-mRNA and the U1 snRNA. Stimulates commitment or early (E) complex formation by stabilizing the base pairing of the 5' end of the U1 snRNA and the 5' splice-site region. This Branchiostoma floridae (Florida lancelet) protein is U1 small nuclear ribonucleoprotein C.